Here is a 352-residue protein sequence, read N- to C-terminus: Cellular tumor antigen p53 (352 aa).

Residues 1-48 form a transcription activation (acidic) region; that stretch reads MDPVPDLPESQGSFQELWETVSYPPLETLSLPTVNEPTGSWVATGDMF. A DNA-binding region spans residues 87 to 273; it reads DYPGSYELEL…KTEEESRQKT (187 aa). Zn(2+)-binding residues include cysteine 161, histidine 164, cysteine 220, and cysteine 224. The interval 254 to 261 is interaction with DNA; that stretch reads RICACPGR. The span at 262-271 shows a compositional bias: basic and acidic residues; the sequence is DRKTEEESRQ. Residues 262–303 are disordered; it reads DRKTEEESRQKTQPKKRKVTPNTSSSKRKKSHSSGEEEDNRE. Positions 276–291 match the Bipartite nuclear localization signal motif; it reads KKRKVTPNTSSSKRKK. The oligomerization stretch occupies residues 302–331; that stretch reads REVFHFEVYGRERYEFLKKINDGLELLEKE. The Nuclear export signal signature appears at 316–327; sequence EFLKKINDGLEL. The tract at residues 330 to 352 is disordered; that stretch reads KESKSKNKDSGMVPSSGKKLKSN. Residues 334 to 350 are basic (repression of DNA-binding); the sequence is SKNKDSGMVPSSGKKLK. At serine 351 the chain carries Phosphoserine.

Belongs to the p53 family. As to quaternary structure, binds DNA as a homotetramer. Requires Zn(2+) as cofactor.

The protein localises to the cytoplasm. Its subcellular location is the nucleus. Multifunctional transcription factor that induces cell cycle arrest, DNA repair or apoptosis upon binding to its target DNA sequence. Acts as a tumor suppressor in many tumor types; induces growth arrest or apoptosis depending on the physiological circumstances and cell type. Negatively regulates cell division by controlling expression of a set of genes required for this process. One of the activated genes is an inhibitor of cyclin-dependent kinases. Apoptosis induction seems to be mediated either by stimulation of BAX and FAS antigen expression, or by repression of Bcl-2 expression. The polypeptide is Cellular tumor antigen p53 (tp53) (Oryzias latipes (Japanese rice fish)).